The following is a 194-amino-acid chain: MTRPLALIIFLVAILTNTDPSRSDAGSDPVNYLFRGPVTAVAAIAGEGEHAGIKGSLTFLQKSLDGRTVINGTISGLPEGKHGLHIVDSGDMTKGCYITTAKGHLNPFNLSHGAPSDSARHVGDLGNIYADDTGISVINLTDTVISLFPTPAFVIGRILVIHTTYDDLGRGGSPVSKVNGNAGGRLACGIISYV.

Residues 1–20 (MTRPLALIIFLVAILTNTDP) form the signal peptide. Positions 85 and 104 each coordinate Cu cation. A disulfide bridge connects residues Cys96 and Cys188. 4 residues coordinate Zn(2+): His104, His112, His121, and Asp124. Residue His162 participates in Cu cation binding.

Belongs to the Cu-Zn superoxide dismutase family. Homodimer. Cu cation is required as a cofactor. It depends on Zn(2+) as a cofactor.

The catalysed reaction is 2 superoxide + 2 H(+) = H2O2 + O2. Destroys radicals which are normally produced within the cells and which are toxic to biological systems. This chain is Superoxide dismutase [Cu-Zn], found in Ramazzottius varieornatus (Water bear).